Consider the following 28-residue polypeptide: Unknown protein from spot 154 of 2D-PAGE of etiolated coleoptile (28 aa).

The sequence is that of Unknown protein from spot 154 of 2D-PAGE of etiolated coleoptile from Zea mays (Maize).